Reading from the N-terminus, the 460-residue chain is Probable lipase C14C8.15 (460 aa).

The Cytoplasmic segment spans residues 1–16; the sequence is MTLNGNIMKYCLEKGE. Residues 17–37 traverse the membrane as a helical; Signal-anchor for type II membrane protein segment; that stretch reads ILISFLLIALESMFRICTVIL. Residues 38 to 460 lie on the Lumenal side of the membrane; it reads PSPLRNWFYE…LVDGVMNHTI (423 aa). Catalysis depends on Ser214, which acts as the Nucleophile. N-linked (GlcNAc...) asparagine glycosylation is present at Asn308. Residues Asp382 and His408 each act as charge relay system in the active site. The N-linked (GlcNAc...) asparagine glycan is linked to Asn457.

The protein belongs to the AB hydrolase superfamily. Lipase family.

It is found in the golgi apparatus. The protein resides in the membrane. Functionally, probable lipase. This chain is Probable lipase C14C8.15, found in Schizosaccharomyces pombe (strain 972 / ATCC 24843) (Fission yeast).